The following is an 832-amino-acid chain: Translation initiation factor IF-2 (832 aa).

Positions 1–244 (MSDTDGKKTL…KAMGGSQERE (244 aa)) are disordered. Polar residues predominate over residues 18–27 (TGQVKQSFSH). Positions 81–141 (KANESEEAER…EARKKAEADA (61 aa)) are enriched in basic and acidic residues. Residues 142 to 171 (SSKPAAARSKADDPATMDPAAAQAAEARGA) are compositionally biased toward low complexity. 2 stretches are compositionally biased toward basic and acidic residues: residues 178–201 (PRKE…DDRR) and 227–244 (RKQE…QERE). Residues 329–497 (PRPPVITVMG…SIALQAEILE (169 aa)) form the tr-type G domain. Residues 338–345 (GHVDHGKT) form a G1 region. 338–345 (GHVDHGKT) serves as a coordination point for GTP. Positions 363–367 (GITQH) are G2. The segment at 385 to 388 (DTPG) is G3. GTP is bound by residues 385-389 (DTPGH) and 439-442 (NKID). The interval 439 to 442 (NKID) is G4. The segment at 475 to 477 (SAI) is G5.

It belongs to the TRAFAC class translation factor GTPase superfamily. Classic translation factor GTPase family. IF-2 subfamily.

It is found in the cytoplasm. Functionally, one of the essential components for the initiation of protein synthesis. Protects formylmethionyl-tRNA from spontaneous hydrolysis and promotes its binding to the 30S ribosomal subunits. Also involved in the hydrolysis of GTP during the formation of the 70S ribosomal complex. The polypeptide is Translation initiation factor IF-2 (Dinoroseobacter shibae (strain DSM 16493 / NCIMB 14021 / DFL 12)).